The primary structure comprises 339 residues: Holliday junction branch migration complex subunit RuvB (339 aa).

Positions 2–187 (KDVNDEERII…FGIIEHMQYY (186 aa)) are large ATPase domain (RuvB-L). Residues leucine 26, arginine 27, glycine 68, lysine 71, threonine 72, threonine 73, 134–136 (EDF), arginine 177, tyrosine 187, and arginine 224 contribute to the ATP site. Threonine 72 provides a ligand contact to Mg(2+). The tract at residues 188-258 (SIDDLEKIIQ…TTKHSLHLLE (71 aa)) is small ATPAse domain (RuvB-S). The head domain (RuvB-H) stretch occupies residues 261-339 (DEGLDQTDRK…QLGYPPKKAE (79 aa)). DNA contacts are provided by arginine 316 and arginine 321.

It belongs to the RuvB family. As to quaternary structure, homohexamer. Forms an RuvA(8)-RuvB(12)-Holliday junction (HJ) complex. HJ DNA is sandwiched between 2 RuvA tetramers; dsDNA enters through RuvA and exits via RuvB. An RuvB hexamer assembles on each DNA strand where it exits the tetramer. Each RuvB hexamer is contacted by two RuvA subunits (via domain III) on 2 adjacent RuvB subunits; this complex drives branch migration. In the full resolvosome a probable DNA-RuvA(4)-RuvB(12)-RuvC(2) complex forms which resolves the HJ.

The protein resides in the cytoplasm. It catalyses the reaction ATP + H2O = ADP + phosphate + H(+). The RuvA-RuvB-RuvC complex processes Holliday junction (HJ) DNA during genetic recombination and DNA repair, while the RuvA-RuvB complex plays an important role in the rescue of blocked DNA replication forks via replication fork reversal (RFR). RuvA specifically binds to HJ cruciform DNA, conferring on it an open structure. The RuvB hexamer acts as an ATP-dependent pump, pulling dsDNA into and through the RuvAB complex. RuvB forms 2 homohexamers on either side of HJ DNA bound by 1 or 2 RuvA tetramers; 4 subunits per hexamer contact DNA at a time. Coordinated motions by a converter formed by DNA-disengaged RuvB subunits stimulates ATP hydrolysis and nucleotide exchange. Immobilization of the converter enables RuvB to convert the ATP-contained energy into a lever motion, pulling 2 nucleotides of DNA out of the RuvA tetramer per ATP hydrolyzed, thus driving DNA branch migration. The RuvB motors rotate together with the DNA substrate, which together with the progressing nucleotide cycle form the mechanistic basis for DNA recombination by continuous HJ branch migration. Branch migration allows RuvC to scan DNA until it finds its consensus sequence, where it cleaves and resolves cruciform DNA. The chain is Holliday junction branch migration complex subunit RuvB from Lactobacillus gasseri (strain ATCC 33323 / DSM 20243 / BCRC 14619 / CIP 102991 / JCM 1131 / KCTC 3163 / NCIMB 11718 / NCTC 13722 / AM63).